The following is a 290-amino-acid chain: MYTPMHNKFQNRFQLANLTHSHSFSHSWLLAISGGQDSLCLLKFMHDLVHHHLVVVHFDHRWSCSLAALRVYYLSRYMHLAWRYFRTALPITTEQDARQYRYANLIQLLYQTHSHAICTAHTASDDLETYLDQWISLRHPEGIWRLCHLSGSQILFRPLLHLTRAQTHWFTLVHYLPIWSDVSNYQITFKRNQLRHQLIPFLKNLNPRFHTTLSARLSARILSPLIVYPWHVWSSLPIWLQYQIATQWGLTLSQIQQLIYNNKYELARSSSINRFSFCDSSRSYHFNLAL.

33 to 38 provides a ligand contact to ATP; that stretch reads SGGQDS.

This sequence belongs to the tRNA(Ile)-lysidine synthase family.

The protein localises to the plastid. It localises to the chloroplast. The catalysed reaction is cytidine(34) in tRNA(Ile2) + L-lysine + ATP = lysidine(34) in tRNA(Ile2) + AMP + diphosphate + H(+). In terms of biological role, ligates lysine onto the cytidine present at position 34 of the AUA codon-specific tRNA(Ile) that contains the anticodon CAU, in an ATP-dependent manner. Cytidine is converted to lysidine, thus changing the amino acid specificity of the tRNA from methionine to isoleucine. The polypeptide is tRNA(Ile)-lysidine synthase, chloroplastic (Cyanidioschyzon merolae (strain NIES-3377 / 10D) (Unicellular red alga)).